The chain runs to 56 residues: UPF0391 membrane protein Bd1438 (56 aa).

The next 2 membrane-spanning stretches (helical) occupy residues 4-24 and 33-53; these read AAIA…SGVA and ILLF…LVSG.

Belongs to the UPF0391 family.

It is found in the cell membrane. The chain is UPF0391 membrane protein Bd1438 from Bdellovibrio bacteriovorus (strain ATCC 15356 / DSM 50701 / NCIMB 9529 / HD100).